A 431-amino-acid polypeptide reads, in one-letter code: Mannan endo-1,4-beta-mannosidase 7 (431 aa).

The N-terminal stretch at 1-25 (MKLLALFPFLAIVIQLSCWELGTDA) is a signal peptide. The substrate site is built by W87 and N202. Catalysis depends on E203, which acts as the Proton donor. Position 280 (Y280) interacts with substrate. The Nucleophile role is filled by E320. W362 is a substrate binding site.

The protein belongs to the glycosyl hydrolase 5 (cellulase A) family. As to expression, expressed in stems, flowers, siliques and seeds. Expressed in root vasculature, leaf hydathodes, anther filaments, stigma, sepal vasculature, at the base and apical parts of siliques, and replum. Expressed in the micropylar endosperm and radicle tip in early germinating seeds.

It localises to the secreted. The enzyme catalyses Random hydrolysis of (1-&gt;4)-beta-D-mannosidic linkages in mannans, galactomannans and glucomannans.. In terms of biological role, required for both, loosening of the micropylar endosperm, and rupture of the seed coat in germinating seeds. May participate in the hydrolysis of the mannans in the cell wall of germinating seeds. This chain is Mannan endo-1,4-beta-mannosidase 7 (MAN7), found in Arabidopsis thaliana (Mouse-ear cress).